Consider the following 95-residue polypeptide: Small ribosomal subunit protein uS19 (95 aa).

It belongs to the universal ribosomal protein uS19 family.

In terms of biological role, protein S19 forms a complex with S13 that binds strongly to the 16S ribosomal RNA. The chain is Small ribosomal subunit protein uS19 (rpsS) from Treponema pallidum (strain Nichols).